Consider the following 237-residue polypeptide: Ribonuclease PH (237 aa).

Phosphate contacts are provided by residues R86 and 124-126; that span reads GTR.

This sequence belongs to the RNase PH family. In terms of assembly, homohexameric ring arranged as a trimer of dimers.

The catalysed reaction is tRNA(n+1) + phosphate = tRNA(n) + a ribonucleoside 5'-diphosphate. Functionally, phosphorolytic 3'-5' exoribonuclease that plays an important role in tRNA 3'-end maturation. Removes nucleotide residues following the 3'-CCA terminus of tRNAs; can also add nucleotides to the ends of RNA molecules by using nucleoside diphosphates as substrates, but this may not be physiologically important. Probably plays a role in initiation of 16S rRNA degradation (leading to ribosome degradation) during starvation. This Zymomonas mobilis subsp. mobilis (strain ATCC 31821 / ZM4 / CP4) protein is Ribonuclease PH.